Consider the following 386-residue polypeptide: Prostatic acid phosphatase (386 aa).

Residues 1–32 (MRAAPLLLARAASLSLGFLFLLFFWLDRSVLA) form the signal peptide. Arg-43 contributes to the substrate binding site. His-44 functions as the Nucleophile in the catalytic mechanism. Arg-47 lines the substrate pocket. Asn-94 carries N-linked (GlcNAc...) asparagine glycosylation. Position 111 (Arg-111) interacts with substrate. Intrachain disulfides connect Cys-161/Cys-372, Cys-215/Cys-313, and Cys-347/Cys-351. Asn-220 carries N-linked (GlcNAc...) asparagine glycosylation. A substrate-binding site is contributed by His-289. Catalysis depends on Asp-290, which acts as the Proton donor. A glycan (N-linked (GlcNAc...) asparagine) is linked at Asn-333.

The protein belongs to the histidine acid phosphatase family. As to quaternary structure, homodimer; dimer formation is required for phosphatase activity. N-glycosylated. High mannose content, partially sialylated and fucosylated biantennary complex. Also fucosylated with partially sialylated triantennary complex oligosaccharides. Post-translationally, proteolytically cleaved in seminal fluid to produce several peptides. Peptide PAPf39, the most prominent, forms amyloid beta-sheet fibrils, SEVI (semen-derived enhancer of viral infection). As to expression, highly expressed in the prostate, restricted to glandular and ductal epithelial cells. Also expressed in bladder, kidney, pancreas, lung, cervix, testis and ovary. Weak expression in a subset of pancreatic islet cells, squamous epithelia, the pilosebaceous unit, colonic neuroendocrine cells and skin adnexal structures. Low expression in prostate carcinoma cells and tissues. Widely expressed. Expressed in the sarcolemma of skeletal muscle.

The protein localises to the secreted. Its subcellular location is the cell membrane. The protein resides in the lysosome membrane. It is found in the nucleus. It localises to the cytoplasm. The protein localises to the cytosol. It catalyses the reaction a phosphate monoester + H2O = an alcohol + phosphate. The enzyme catalyses 1-(9Z-octadecenoyl)-sn-glycero-3-phosphate + H2O = 1-(9Z-octadecenoyl)-sn-glycerol + phosphate. It carries out the reaction a ribonucleoside 5'-phosphate + H2O = a ribonucleoside + phosphate. The catalysed reaction is O-phospho-L-tyrosyl-[protein] + H2O = L-tyrosyl-[protein] + phosphate. Phosphatase activity inhibited by L(+)-tartrate, and by its derivative, alpha-benzylaminobenzylphosphonic acid. A non-specific tyrosine phosphatase that dephosphorylates a diverse number of substrates under acidic conditions (pH 4-6) including alkyl, aryl, and acyl orthophosphate monoesters and phosphorylated proteins. Has lipid phosphatase activity and inactivates lysophosphatidic acid in seminal plasma. Functionally, tyrosine phosphatase that acts as a tumor suppressor of prostate cancer through dephosphorylation of ERBB2 and deactivation of MAPK-mediated signaling. In addition to its tyrosine phosphatase activity has ecto-5'-nucleotidase activity in dorsal root ganglion (DRG) neurons. Generates adenosine from AMP which acts as a pain suppressor. Its function is as follows. (Microbial infection) Forms amyloid beta-sheet fibrils in semen. These fibrils, termed SEVI (semen-derived enhancer of viral infection) capture HIV virions, attach them to target cells and enhance infection. SEVI amyloid fibrils are degraded by polyphenol epigallocatechin-3-gallate (EGCG), a constituent of green tea. Target cell attachment and enhancement of HIV infection is inhibited by surfen. Also similarly boosts XMRV (xenotropic murine leukemia virus-related virus) infection. In Homo sapiens (Human), this protein is Prostatic acid phosphatase.